The chain runs to 40 residues: Large ribosomal subunit protein bL36 (40 aa).

This sequence belongs to the bacterial ribosomal protein bL36 family.

This Corynebacterium diphtheriae (strain ATCC 700971 / NCTC 13129 / Biotype gravis) protein is Large ribosomal subunit protein bL36.